We begin with the raw amino-acid sequence, 558 residues long: CTP synthase (558 aa).

An amidoligase domain region spans residues 1–271 (MAARQQTKHL…DAYVVRRLGL (271 aa)). Ser18 contributes to the CTP binding site. Ser18 serves as a coordination point for UTP. ATP contacts are provided by residues 19 to 24 (SLGKGL) and Asp76. Positions 76 and 145 each coordinate Mg(2+). CTP-binding positions include 152-154 (DIE), 192-197 (KTKPTQ), and Lys228. UTP-binding positions include 192–197 (KTKPTQ) and Lys228. The Glutamine amidotransferase type-1 domain maps to 296–545 (TIALVGKYVD…IRAALLHRCP (250 aa)). Gly359 contacts L-glutamine. Cys386 functions as the Nucleophile; for glutamine hydrolysis in the catalytic mechanism. L-glutamine-binding positions include 387–390 (LGLQ), Glu410, and Arg471. Catalysis depends on residues His518 and Glu520.

This sequence belongs to the CTP synthase family. As to quaternary structure, homotetramer.

The enzyme catalyses UTP + L-glutamine + ATP + H2O = CTP + L-glutamate + ADP + phosphate + 2 H(+). The catalysed reaction is L-glutamine + H2O = L-glutamate + NH4(+). It carries out the reaction UTP + NH4(+) + ATP = CTP + ADP + phosphate + 2 H(+). It participates in pyrimidine metabolism; CTP biosynthesis via de novo pathway; CTP from UDP: step 2/2. Allosterically activated by GTP, when glutamine is the substrate; GTP has no effect on the reaction when ammonia is the substrate. The allosteric effector GTP functions by stabilizing the protein conformation that binds the tetrahedral intermediate(s) formed during glutamine hydrolysis. Inhibited by the product CTP, via allosteric rather than competitive inhibition. Catalyzes the ATP-dependent amination of UTP to CTP with either L-glutamine or ammonia as the source of nitrogen. Regulates intracellular CTP levels through interactions with the four ribonucleotide triphosphates. This is CTP synthase from Acidothermus cellulolyticus (strain ATCC 43068 / DSM 8971 / 11B).